We begin with the raw amino-acid sequence, 68 residues long: Non-disulfide-bridged peptide 5.6 (68 aa).

The first 23 residues, 1–23 (MKTQVIIFIMAVVFLQLLSQSEA), serve as a signal peptide directing secretion. Positions 37–68 (ELRNIDLDQFDDMFDEPEISAADMRFLQELLK) are excised as a propeptide.

The protein belongs to the non-disulfide-bridged peptide (NDBP) superfamily. Short antimicrobial peptide (group 4) family. As to expression, expressed by the venom gland.

The protein localises to the secreted. It localises to the target cell membrane. Antibacterial peptide with activity against both Gram-positive and Gram-negative bacteria probably by forming pores in the cell membrane. Also has weak hemolytic activity. Does not show antifungal activity. This chain is Non-disulfide-bridged peptide 5.6, found in Hoffmannihadrurus gertschi (Scorpion).